The sequence spans 78 residues: UPF0270 protein YPTB3725 (78 aa).

This sequence belongs to the UPF0270 family.

The polypeptide is UPF0270 protein YPTB3725 (Yersinia pseudotuberculosis serotype I (strain IP32953)).